Consider the following 483-residue polypeptide: GDP-fucose protein O-fucosyltransferase 4 (483 aa).

Residue methionine 1 is a topological domain, cytoplasmic. Residues 2 to 21 (ALCLWLFLVLPICCWCQGAV) traverse the membrane as a helical; Signal-anchor for type II membrane protein segment. Over 22–483 (DLGDSGVFQP…RARGLSNDSR (462 aa)) the chain is Lumenal. N-linked (GlcNAc...) asparagine glycosylation is found at asparagine 151 and asparagine 303. Cysteines 374 and 377 form a disulfide. Positions 387–425 (RKAHRKNPKQNQPPQPKMANSSHMGCPLPSPGYGPVENV) are disordered. 4 N-linked (GlcNAc...) asparagine glycosylation sites follow: asparagine 406, asparagine 428, asparagine 456, and asparagine 480.

Belongs to the glycosyltransferase 10 family.

It localises to the endoplasmic reticulum membrane. The enzyme catalyses L-threonyl-[protein] + GDP-beta-L-fucose = 3-O-(alpha-L-fucosyl)-L-threonyl-[protein] + GDP + H(+). It carries out the reaction L-seryl-[protein] + GDP-beta-L-fucose = 3-O-(alpha-L-fucosyl)-L-seryl-[protein] + GDP + H(+). It participates in protein modification; protein glycosylation. Protein O-fucosyltransferase that specifically catalyzes O-fucosylation of serine or threonine residues in EMI domains of target proteins. Attaches fucose through an O-glycosidic linkage. O-fucosylation of EMI domain-containing proteins may be required for facilitating protein folding and secretion. This Danio rerio (Zebrafish) protein is GDP-fucose protein O-fucosyltransferase 4 (fut11).